The primary structure comprises 73 residues: Small ribosomal subunit protein bS18c (73 aa).

The protein belongs to the bacterial ribosomal protein bS18 family. As to quaternary structure, part of the 30S ribosomal subunit.

Its subcellular location is the plastid. The protein localises to the chloroplast. This Rhodomonas salina (Cryptomonas salina) protein is Small ribosomal subunit protein bS18c.